The following is a 337-amino-acid chain: Ribosomal RNA small subunit methyltransferase H (337 aa).

S-adenosyl-L-methionine-binding positions include 36 to 38 (GGH), D56, F82, D100, and Q107. The interval 317–337 (RRSGRIPNPQSPIPASQGDAR) is disordered.

The protein belongs to the methyltransferase superfamily. RsmH family.

It localises to the cytoplasm. The catalysed reaction is cytidine(1402) in 16S rRNA + S-adenosyl-L-methionine = N(4)-methylcytidine(1402) in 16S rRNA + S-adenosyl-L-homocysteine + H(+). Its function is as follows. Specifically methylates the N4 position of cytidine in position 1402 (C1402) of 16S rRNA. The protein is Ribosomal RNA small subunit methyltransferase H of Xanthomonas oryzae pv. oryzae (strain KACC10331 / KXO85).